A 245-amino-acid chain; its full sequence is ATP synthase subunit b (245 aa).

The chain crosses the membrane as a helical span at residues 3–23 (SFNLLTIVSSIVNLLALAWII).

This sequence belongs to the ATPase B chain family. F-type ATPases have 2 components, F(1) - the catalytic core - and F(0) - the membrane proton channel. F(1) has five subunits: alpha(3), beta(3), gamma(1), delta(1), epsilon(1). F(0) has three main subunits: a(1), b(2) and c(10-14). The alpha and beta chains form an alternating ring which encloses part of the gamma chain. F(1) is attached to F(0) by a central stalk formed by the gamma and epsilon chains, while a peripheral stalk is formed by the delta and b chains.

Its subcellular location is the cell inner membrane. In terms of biological role, f(1)F(0) ATP synthase produces ATP from ADP in the presence of a proton or sodium gradient. F-type ATPases consist of two structural domains, F(1) containing the extramembraneous catalytic core and F(0) containing the membrane proton channel, linked together by a central stalk and a peripheral stalk. During catalysis, ATP synthesis in the catalytic domain of F(1) is coupled via a rotary mechanism of the central stalk subunits to proton translocation. Component of the F(0) channel, it forms part of the peripheral stalk, linking F(1) to F(0). The sequence is that of ATP synthase subunit b from Dictyoglomus thermophilum (strain ATCC 35947 / DSM 3960 / H-6-12).